The chain runs to 117 residues: Large ribosomal subunit protein bL20 (117 aa).

The protein belongs to the bacterial ribosomal protein bL20 family.

In terms of biological role, binds directly to 23S ribosomal RNA and is necessary for the in vitro assembly process of the 50S ribosomal subunit. It is not involved in the protein synthesizing functions of that subunit. This chain is Large ribosomal subunit protein bL20, found in Chromohalobacter salexigens (strain ATCC BAA-138 / DSM 3043 / CIP 106854 / NCIMB 13768 / 1H11).